The following is a 427-amino-acid chain: Serine--tRNA ligase (427 aa).

231–233 (TAE) lines the L-serine pocket. 262 to 264 (RSE) contributes to the ATP binding site. Glu-285 contacts L-serine. Residue 349–352 (EISS) participates in ATP binding. Position 385 (Ser-385) interacts with L-serine.

The protein belongs to the class-II aminoacyl-tRNA synthetase family. Type-1 seryl-tRNA synthetase subfamily. Homodimer. The tRNA molecule binds across the dimer.

It localises to the cytoplasm. The catalysed reaction is tRNA(Ser) + L-serine + ATP = L-seryl-tRNA(Ser) + AMP + diphosphate + H(+). The enzyme catalyses tRNA(Sec) + L-serine + ATP = L-seryl-tRNA(Sec) + AMP + diphosphate + H(+). Its pathway is aminoacyl-tRNA biosynthesis; selenocysteinyl-tRNA(Sec) biosynthesis; L-seryl-tRNA(Sec) from L-serine and tRNA(Sec): step 1/1. Functionally, catalyzes the attachment of serine to tRNA(Ser). Is also able to aminoacylate tRNA(Sec) with serine, to form the misacylated tRNA L-seryl-tRNA(Sec), which will be further converted into selenocysteinyl-tRNA(Sec). This is Serine--tRNA ligase from Staphylococcus saprophyticus subsp. saprophyticus (strain ATCC 15305 / DSM 20229 / NCIMB 8711 / NCTC 7292 / S-41).